Reading from the N-terminus, the 450-residue chain is tRNA modification GTPase MnmE (450 aa).

The (6S)-5-formyl-5,6,7,8-tetrahydrofolate site is built by arginine 23, glutamate 79, and lysine 118. The TrmE-type G domain maps to 214-374; that stretch reads GITLILVGKP…LKEHILNKVG (161 aa). Residue asparagine 224 participates in K(+) binding. Residues 224 to 229, 243 to 249, and 268 to 271 each bind GTP; these read NAGKSS, TSIAGTT, and DTAG. Position 228 (serine 228) interacts with Mg(2+). K(+)-binding residues include threonine 243, isoleucine 245, and threonine 248. A Mg(2+)-binding site is contributed by threonine 249. Residue lysine 450 coordinates (6S)-5-formyl-5,6,7,8-tetrahydrofolate.

The protein belongs to the TRAFAC class TrmE-Era-EngA-EngB-Septin-like GTPase superfamily. TrmE GTPase family. In terms of assembly, homodimer. Heterotetramer of two MnmE and two MnmG subunits. Requires K(+) as cofactor.

The protein localises to the cytoplasm. Functionally, exhibits a very high intrinsic GTPase hydrolysis rate. Involved in the addition of a carboxymethylaminomethyl (cmnm) group at the wobble position (U34) of certain tRNAs, forming tRNA-cmnm(5)s(2)U34. The polypeptide is tRNA modification GTPase MnmE (Francisella tularensis subsp. tularensis (strain FSC 198)).